A 93-amino-acid chain; its full sequence is Sec-independent protein translocase protein TatA (93 aa).

A helical membrane pass occupies residues 1–21; it reads MGNVFSGWHLLVILLVIVLLF. The disordered stretch occupies residues 49–93; it reads DITRSQDGHPDSQGNFAESASSVPFVKSEKQSEKRASVTEAKKSK. A compositionally biased stretch (polar residues) spans 60 to 70; sequence SQGNFAESASS. Residues 75 to 93 are compositionally biased toward basic and acidic residues; the sequence is KSEKQSEKRASVTEAKKSK.

Belongs to the TatA/E family. In terms of assembly, the Tat system comprises two distinct complexes: a TatABC complex, containing multiple copies of TatA, TatB and TatC subunits, and a separate TatA complex, containing only TatA subunits. Substrates initially bind to the TatABC complex, which probably triggers association of the separate TatA complex to form the active translocon.

It localises to the cell membrane. In terms of biological role, part of the twin-arginine translocation (Tat) system that transports large folded proteins containing a characteristic twin-arginine motif in their signal peptide across membranes. TatA could form the protein-conducting channel of the Tat system. This is Sec-independent protein translocase protein TatA from Tropheryma whipplei (strain TW08/27) (Whipple's bacillus).